The chain runs to 213 residues: FMN-dependent NADH:quinone oxidoreductase (213 aa).

Belongs to the azoreductase type 1 family. As to quaternary structure, homodimer. Requires FMN as cofactor.

The enzyme catalyses 2 a quinone + NADH + H(+) = 2 a 1,4-benzosemiquinone + NAD(+). It catalyses the reaction N,N-dimethyl-1,4-phenylenediamine + anthranilate + 2 NAD(+) = 2-(4-dimethylaminophenyl)diazenylbenzoate + 2 NADH + 2 H(+). Quinone reductase that provides resistance to thiol-specific stress caused by electrophilic quinones. Functionally, also exhibits azoreductase activity. Catalyzes the reductive cleavage of the azo bond in aromatic azo compounds to the corresponding amines. The chain is FMN-dependent NADH:quinone oxidoreductase from Streptococcus agalactiae serotype III (strain NEM316).